Here is a 404-residue protein sequence, read N- to C-terminus: Histidinol dehydrogenase (404 aa).

NAD(+) contacts are provided by tyrosine 114, glutamine 176, and asparagine 199. The substrate site is built by serine 222, glutamine 244, and histidine 247. Positions 244 and 247 each coordinate Zn(2+). Catalysis depends on proton acceptor residues glutamate 300 and histidine 301. Residues histidine 301, aspartate 334, glutamate 388, and histidine 393 each coordinate substrate. Zn(2+) is bound at residue aspartate 334. Residue histidine 393 participates in Zn(2+) binding.

This sequence belongs to the histidinol dehydrogenase family. Zn(2+) serves as cofactor.

The catalysed reaction is L-histidinol + 2 NAD(+) + H2O = L-histidine + 2 NADH + 3 H(+). The protein operates within amino-acid biosynthesis; L-histidine biosynthesis; L-histidine from 5-phospho-alpha-D-ribose 1-diphosphate: step 9/9. Catalyzes the sequential NAD-dependent oxidations of L-histidinol to L-histidinaldehyde and then to L-histidine. The protein is Histidinol dehydrogenase (hisD) of Archaeoglobus fulgidus (strain ATCC 49558 / DSM 4304 / JCM 9628 / NBRC 100126 / VC-16).